Here is a 293-residue protein sequence, read N- to C-terminus: 4-hydroxy-tetrahydrodipicolinate synthase (293 aa).

Threonine 47 serves as a coordination point for pyruvate. The Proton donor/acceptor role is filled by tyrosine 135. Lysine 164 acts as the Schiff-base intermediate with substrate in catalysis. Isoleucine 206 contacts pyruvate.

The protein belongs to the DapA family. In terms of assembly, homotetramer; dimer of dimers.

It localises to the cytoplasm. It catalyses the reaction L-aspartate 4-semialdehyde + pyruvate = (2S,4S)-4-hydroxy-2,3,4,5-tetrahydrodipicolinate + H2O + H(+). Its pathway is amino-acid biosynthesis; L-lysine biosynthesis via DAP pathway; (S)-tetrahydrodipicolinate from L-aspartate: step 3/4. Functionally, catalyzes the condensation of (S)-aspartate-beta-semialdehyde [(S)-ASA] and pyruvate to 4-hydroxy-tetrahydrodipicolinate (HTPA). This Flavobacterium psychrophilum (strain ATCC 49511 / DSM 21280 / CIP 103535 / JIP02/86) protein is 4-hydroxy-tetrahydrodipicolinate synthase.